The following is a 263-amino-acid chain: Small ribosomal subunit protein eS4, X isoform (263 aa).

One can recognise an S4 RNA-binding domain in the interval 42-104; it reads LPLIIFLRNR…TGEHFRLVYD (63 aa). A Glycyl lysine isopeptide (Lys-Gly) (interchain with G-Cter in SUMO2) cross-link involves residue K230. K233 is subject to N6-acetyllysine.

This sequence belongs to the eukaryotic ribosomal protein eS4 family. As to quaternary structure, component of the small ribosomal subunit. Part of the small subunit (SSU) processome, composed of more than 70 proteins and the RNA chaperone small nucleolar RNA (snoRNA) U3. Identified in a IGF2BP1-dependent mRNP granule complex containing untranslated mRNAs.

Its subcellular location is the cytoplasm. It localises to the nucleus. It is found in the nucleolus. Functionally, component of the small ribosomal subunit. The ribosome is a large ribonucleoprotein complex responsible for the synthesis of proteins in the cell. Part of the small subunit (SSU) processome, first precursor of the small eukaryotic ribosomal subunit. During the assembly of the SSU processome in the nucleolus, many ribosome biogenesis factors, an RNA chaperone and ribosomal proteins associate with the nascent pre-rRNA and work in concert to generate RNA folding, modifications, rearrangements and cleavage as well as targeted degradation of pre-ribosomal RNA by the RNA exosome. The protein is Small ribosomal subunit protein eS4, X isoform (RPS4X) of Monodelphis domestica (Gray short-tailed opossum).